A 1567-amino-acid chain; its full sequence is ABC multidrug transporter MDR1 (1567 aa).

Positions 1–11 (MASQPPQPPSG) are enriched in pro residues. Residues 1 to 37 (MASQPPQPPSGQPDTQYEEYQSEVITETTNRPTPAAD) form a disordered region. Residues 22 to 32 (SEVITETTNRP) are compositionally biased toward polar residues. N-linked (GlcNAc...) asparagine glycosylation is found at Asn149, Asn157, and Asn356. The ABC transporter 1 domain occupies 167-432 (VQYQDTFLSP…FEEMGWYCPP (266 aa)). 6 helical membrane passes run 543–563 (STIA…SLFF), 571–591 (GFFA…LMSI), 636–656 (IPIK…LGGL), 661–681 (AKFF…SAIF), 691–711 (IPQA…YTGF), and 798–818 (LGIL…VSEL). Residues Asn819, Asn895, and Asn912 are each glycosylated (N-linked (GlcNAc...) asparagine). The ABC transporter 2 domain occupies 891 to 1134 (FTWRNVTYDI…LLNYFETHGA (244 aa)). Position 927 to 934 (927 to 934 (GVSGAGKT)) interacts with ATP. The tract at residues 1172–1202 (ESRHVQQELDRIQSETSKRNEGHGQSAEKEP) is disordered. The helical transmembrane segment at 1231–1251 (IWGKLLLGLASALFIGFSFFL) threads the bilayer. An N-linked (GlcNAc...) asparagine glycan is attached at Asn1253. 5 helical membrane passes run 1257–1277 (AGLQ…SSLV), 1305–1325 (VFLL…GIIA), 1345–1365 (ILLL…QMII), 1372–1392 (ETAG…NGVL), and 1498–1518 (GIGW…YYLI).

It belongs to the ABC transporter superfamily. ABCG family. PDR (TC 3.A.1.205) subfamily.

Its subcellular location is the cell membrane. The enzyme catalyses voriconazole(in) + ATP + H2O = voriconazole(out) + ADP + phosphate + H(+). It carries out the reaction fluconazole(in) + ATP + H2O = fluconazole(out) + ADP + phosphate + H(+). It catalyses the reaction (R)-miconazole(in) + ATP + H2O = (R)-miconazole(out) + ADP + phosphate + H(+). The catalysed reaction is (S)-miconazole(in) + ATP + H2O = (S)-miconazole(out) + ADP + phosphate + H(+). Pleiotropic ABC efflux transporter that may be involved in the modulation susceptibility to a wide range of unrelated cytotoxic compounds, including ethidium bromide, ketoconazole, cycloheximide, fluconazole, griseofulvin, imazalil and itraconazole. This Trichophyton interdigitale (strain MR816) protein is ABC multidrug transporter MDR1.